Consider the following 491-residue polypeptide: Bifunctional protein HldE (491 aa).

The tract at residues 1 to 330 (MDRKMVESLF…AAVSLEHRDS (330 aa)) is ribokinase. 205–208 (NRKE) contributes to the ATP binding site. Asp-275 is an active-site residue. Residues 356 to 491 (FTNGCFDLLH…KVLERYTDEQ (136 aa)) form a cytidylyltransferase region.

In the N-terminal section; belongs to the carbohydrate kinase PfkB family. This sequence in the C-terminal section; belongs to the cytidylyltransferase family. As to quaternary structure, homodimer.

The enzyme catalyses D-glycero-beta-D-manno-heptose 7-phosphate + ATP = D-glycero-beta-D-manno-heptose 1,7-bisphosphate + ADP + H(+). It catalyses the reaction D-glycero-beta-D-manno-heptose 1-phosphate + ATP + H(+) = ADP-D-glycero-beta-D-manno-heptose + diphosphate. Its pathway is nucleotide-sugar biosynthesis; ADP-L-glycero-beta-D-manno-heptose biosynthesis; ADP-L-glycero-beta-D-manno-heptose from D-glycero-beta-D-manno-heptose 7-phosphate: step 1/4. The protein operates within nucleotide-sugar biosynthesis; ADP-L-glycero-beta-D-manno-heptose biosynthesis; ADP-L-glycero-beta-D-manno-heptose from D-glycero-beta-D-manno-heptose 7-phosphate: step 3/4. Catalyzes the phosphorylation of D-glycero-D-manno-heptose 7-phosphate at the C-1 position to selectively form D-glycero-beta-D-manno-heptose-1,7-bisphosphate. Its function is as follows. Catalyzes the ADP transfer from ATP to D-glycero-beta-D-manno-heptose 1-phosphate, yielding ADP-D-glycero-beta-D-manno-heptose. This chain is Bifunctional protein HldE, found in Trichlorobacter lovleyi (strain ATCC BAA-1151 / DSM 17278 / SZ) (Geobacter lovleyi).